The sequence spans 152 residues: Ribosome maturation factor RimP (152 aa).

Belongs to the RimP family.

It localises to the cytoplasm. Functionally, required for maturation of 30S ribosomal subunits. The polypeptide is Ribosome maturation factor RimP (Pseudomonas putida (strain GB-1)).